The primary structure comprises 544 residues: Cytochrome P450 82A1 (544 aa).

Residue Cys481 participates in heme binding.

Belongs to the cytochrome P450 family. The cofactor is heme.

It localises to the membrane. The chain is Cytochrome P450 82A1 (CYP82A1) from Pisum sativum (Garden pea).